Consider the following 383-residue polypeptide: BRISC and BRCA1-A complex member 2 (383 aa).

An N-acetylmethionine modification is found at methionine 1. Residue serine 2 is modified to Phosphoserine. UEV-like regions lie at residues 30-147 and 275-364; these read DATN…TLLE and IAAF…RAKA.

This sequence belongs to the BABAM2 family. Component of the ARISC complex, at least composed of UIMC1/RAP80, ABRAXAS1, BRCC3/BRCC36, BABAM2 and BABAM1/NBA1. Component of the BRCA1-A complex, at least composed of BRCA1, BARD1, UIMC1/RAP80, ABRAXAS1, BRCC3/BRCC36, BABAM2 and BABAM1/NBA1. In the BRCA1-A complex, interacts directly with ABRAXAS1, BRCC3/BRCC36 and BABAM1/NBA1. Binds polyubiquitin. Component of the BRISC complex, at least composed of ABRAXAS2, BRCC3/BRCC36, BABAM2 and BABAM1/NBA1. Identified in a complex with SHMT2 and the other subunits of the BRISC complex. Component of the BRCA1/BRCA2 containing complex (BRCC), which also contains BRCA1, BRCA2, BARD1, BRCC3/BRCC36 and RAD51. BRCC is a ubiquitin E3 ligase complex that enhances cellular survival following DNA damage. May interact with FAS and TNFRSF1A. In terms of tissue distribution, expressed in all cell lines examined. Highly expressed in placenta.

The protein resides in the cytoplasm. The protein localises to the nucleus. Its function is as follows. Component of the BRCA1-A complex, a complex that specifically recognizes 'Lys-63'-linked ubiquitinated histones H2A and H2AX at DNA lesions sites, leading to target the BRCA1-BARD1 heterodimer to sites of DNA damage at double-strand breaks (DSBs). The BRCA1-A complex also possesses deubiquitinase activity that specifically removes 'Lys-63'-linked ubiquitin on histones H2A and H2AX. In the BRCA1-A complex, it acts as an adapter that bridges the interaction between BABAM1/NBA1 and the rest of the complex, thereby being required for the complex integrity and modulating the E3 ubiquitin ligase activity of the BRCA1-BARD1 heterodimer. Component of the BRISC complex, a multiprotein complex that specifically cleaves 'Lys-63'-linked ubiquitin in various substrates. Within the BRISC complex, acts as an adapter that bridges the interaction between BABAM1/NBA1 and the rest of the complex, thereby being required for the complex integrity. The BRISC complex is required for normal mitotic spindle assembly and microtubule attachment to kinetochores via its role in deubiquitinating NUMA1. The BRISC complex plays a role in interferon signaling via its role in the deubiquitination of the interferon receptor IFNAR1; deubiquitination increases IFNAR1 activity by enhancing its stability and cell surface expression. Down-regulates the response to bacterial lipopolysaccharide (LPS) via its role in IFNAR1 deubiquitination. May play a role in homeostasis or cellular differentiation in cells of neural, epithelial and germline origins. May also act as a death receptor-associated anti-apoptotic protein, which inhibits the mitochondrial apoptotic pathway. May regulate TNF-alpha signaling through its interactions with TNFRSF1A; however these effects may be indirect. The polypeptide is BRISC and BRCA1-A complex member 2 (Homo sapiens (Human)).